A 132-amino-acid polypeptide reads, in one-letter code: Large ribosomal subunit protein uL14 (132 aa).

It belongs to the universal ribosomal protein uL14 family. Part of the 50S ribosomal subunit. Forms a cluster with proteins L3 and L24e, part of which may contact the 16S rRNA in 2 intersubunit bridges.

In terms of biological role, binds to 23S rRNA. Forms part of two intersubunit bridges in the 70S ribosome. The polypeptide is Large ribosomal subunit protein uL14 (Thermoplasma acidophilum (strain ATCC 25905 / DSM 1728 / JCM 9062 / NBRC 15155 / AMRC-C165)).